Here is a 307-residue protein sequence, read N- to C-terminus: uncharacterized protein (307 aa).

The N-terminal stretch at 1–25 (MKFQKRNIQLVLILLLILNNCFINS) is a signal peptide. Positions 60 to 90 (ENNNKNNNNNNNNNNNNNNNNKNSKVKNDDS) are disordered. A compositionally biased stretch (low complexity) spans 63-82 (NKNNNNNNNNNNNNNNNNKN). Residues asparagine 124 and asparagine 173 are each glycosylated (N-linked (GlcNAc...) asparagine). Transmembrane regions (helical) follow at residues 244–264 (IIFA…YYLA) and 275–295 (IIGV…TIVI).

Its subcellular location is the membrane. This is an uncharacterized protein from Dictyostelium discoideum (Social amoeba).